We begin with the raw amino-acid sequence, 223 residues long: Putative PAN domain-containing protein R486 (223 aa).

A signal peptide spans 1 to 23 (MSQTAIIIWIVVIIILLVLGGLG). A disordered region spans residues 39–73 (PTPINPPSSITPIQPINPPSSITPIQPSGPPSGGN). The segment covering 45–64 (PSSITPIQPINPPSSITPIQ) has biased composition (low complexity). 2 PAN domains span residues 80 to 155 (CPAY…EDGC) and 159 to 223 (ARYN…KMPH). Intrachain disulfides connect C80–C155 and C109–C131. Residues N162, N189, and N213 are each glycosylated (N-linked (GlcNAc...) asparagine; by host). The cysteines at positions 182 and 204 are disulfide-linked.

It localises to the secreted. The protein resides in the virion. This Acanthamoeba polyphaga mimivirus (APMV) protein is Putative PAN domain-containing protein R486.